Here is a 64-residue protein sequence, read N- to C-terminus: Small ribosomal subunit protein bS18c (64 aa).

This sequence belongs to the bacterial ribosomal protein bS18 family. In terms of assembly, part of the 30S ribosomal subunit.

The protein resides in the plastid. It is found in the chloroplast. In Bigelowiella natans (Pedinomonas minutissima), this protein is Small ribosomal subunit protein bS18c (rps18).